We begin with the raw amino-acid sequence, 594 residues long: ATP-dependent RNA helicase DBP9 (594 aa).

Residues 15–43 (SSFDSFHLDSRLSQAIRSIGFKHPTLIQS) carry the Q motif motif. Residues 47–229 (PLALQEKRDI…QQFCRSPAIL (183 aa)) form the Helicase ATP-binding domain. 60–67 (ASTGSGKT) contacts ATP. The DEAD box signature appears at 175–178 (DEVD). The 233-residue stretch at 242 to 474 (KLIQYYVKVG…PYNFDIKQVE (233 aa)) folds into the Helicase C-terminal domain. The disordered stretch occupies residues 562 to 594 (PFHKNSHRKNGRVVKKKGNVQRKGKSDPLKSFK). A compositionally biased stretch (basic residues) spans 565 to 584 (KNSHRKNGRVVKKKGNVQRK). Residues 585-594 (GKSDPLKSFK) show a composition bias toward basic and acidic residues.

It belongs to the DEAD box helicase family. DDX56/DBP9 subfamily.

It localises to the nucleus. The protein localises to the nucleolus. It catalyses the reaction ATP + H2O = ADP + phosphate + H(+). In terms of biological role, ATP-binding RNA helicase involved in the biogenesis of 60S ribosomal subunits and is required for the normal formation of 25S and 5.8S rRNAs. In Kluyveromyces lactis (strain ATCC 8585 / CBS 2359 / DSM 70799 / NBRC 1267 / NRRL Y-1140 / WM37) (Yeast), this protein is ATP-dependent RNA helicase DBP9 (DBP9).